We begin with the raw amino-acid sequence, 425 residues long: Probable aminotransferase tcpI (425 aa).

Lys256 carries the N6-(pyridoxal phosphate)lysine modification.

This sequence belongs to the class-I pyridoxal-phosphate-dependent aminotransferase family. It depends on pyridoxal 5'-phosphate as a cofactor.

It functions in the pathway secondary metabolite biosynthesis. In terms of biological role, probable aminotransferase; part of the gene cluster that mediates the biosynthesis of an unusual class of epipolythiodioxopiperazines (ETPs) lacking the reactive thiol group important for toxicity. Firstly, L-tyrosine is prenylated by tcpD, before undergoing condensation with L-glycine in a reaction catalyzed by the NRPS tcpP leading to the diketopiperazine (DKP) backbone. Afterwards the alpha-carbon of tyrosine is oxidized by the cytochrome P450 tcpC to form a hydroxyl group. However, in contrast other ETP biosynthesis pathways studied so far, tcpC is not able to bishydroxylate the DKP at both alpha-carbon positions, but hydroxylates the alpha-carbon of the tyrosine part and the nitrogen of the glycine part. The next steps involve an alpha,beta-elimination reaction catalyzed by tcpI, a methylation by the methyltransferase tcpN the action of the four enzyme cascade tcpG/K/J/I. Due to a dysfunctional cytochrome P450 monooxygenase tcpC, the pathway leads to the biosynthesis of probable non-toxic metabolites lacking the reactive thiol group. In Claviceps purpurea (strain 20.1) (Ergot fungus), this protein is Probable aminotransferase tcpI.